The primary structure comprises 332 residues: DNA-directed RNA polymerase subunit alpha (332 aa).

Residues 1-234 form an alpha N-terminal domain (alpha-NTD) region; the sequence is MTVTISQVLR…DQLSVFGDFT (234 aa). Residues 248 to 332 form an alpha C-terminal domain (alpha-CTD) region; sequence VDPVLLRPID…PGVSQYGMLG (85 aa).

It belongs to the RNA polymerase alpha chain family. Homodimer. The RNAP catalytic core consists of 2 alpha, 1 beta, 1 beta' and 1 omega subunit. When a sigma factor is associated with the core the holoenzyme is formed, which can initiate transcription.

The enzyme catalyses RNA(n) + a ribonucleoside 5'-triphosphate = RNA(n+1) + diphosphate. Its function is as follows. DNA-dependent RNA polymerase catalyzes the transcription of DNA into RNA using the four ribonucleoside triphosphates as substrates. The sequence is that of DNA-directed RNA polymerase subunit alpha from Xylella fastidiosa (strain M12).